The sequence spans 462 residues: Hemopexin (462 aa).

A signal peptide spans 1–23; sequence MARVLGAPVALGLWSLCWSLAIA. O-linked (GalNAc...) threonine glycosylation is found at Thr24 and Thr29. The disordered stretch occupies residues 29–48; sequence TSAHGNVAEGETKPDPDVTE. The interval 30-40 is O-glycosylated at one site; the sequence is SAHGNVAEGET. The span at 38–48 shows a compositional bias: basic and acidic residues; the sequence is GETKPDPDVTE. 3 disulfide bridges follow: Cys50-Cys231, Cys149-Cys154, and Cys188-Cys200. Hemopexin repeat units lie at residues 53-93, 94-139, 140-184, and 185-231; these read GWSF…WKNF, PSPV…FPGI, PSPL…SWPA, and VGNC…FMPC. N-linked (GlcNAc...) (complex) asparagine glycosylation is present at Asn64. His79 is a heme binding site. His150 contributes to the heme binding site. Asn187 carries N-linked (GlcNAc...) (complex) asparagine glycosylation. His236 serves as a coordination point for heme. Asn240 and Asn246 each carry an N-linked (GlcNAc...) asparagine glycan. 3 disulfides stabilise this stretch: Cys257/Cys460, Cys366/Cys408, and Cys418/Cys435. 4 Hemopexin repeats span residues 259-304, 305-352, 357-396, and 400-450; these read PHLV…WPQG, PSAV…VGTP, LDSVDAAFICPGSSRLHIMAGRRLWWLDLKSGAQATWTEL, and HEKV…ALPQ. His293 contributes to the heme binding site. A glycan (N-linked (GlcNAc...) (complex) asparagine) is linked at Asn453.

Belongs to the hemopexin family. As to quaternary structure, interacts with FLVCR1. (Microbial infection) Interacts with hepatitis E virus/HEV protein ORF3. In terms of processing, N- and O-glycosylated. O-glycosylated with core 1 or possibly core 8 glycans. O-glycosylation in the 30-40 region is minor compared to glycosylation at Thr-24 and Thr-29. Expressed by the liver and secreted in plasma.

Its subcellular location is the secreted. Functionally, binds heme and transports it to the liver for breakdown and iron recovery, after which the free hemopexin returns to the circulation. In Homo sapiens (Human), this protein is Hemopexin (HPX).